Reading from the N-terminus, the 201-residue chain is Large ribosomal subunit protein uL4 (201 aa).

The interval 39 to 72 (KRQGTSAQKSRSEVIGSGKKPWRQKGTGRARAGS) is disordered.

The protein belongs to the universal ribosomal protein uL4 family. Part of the 50S ribosomal subunit.

Functionally, one of the primary rRNA binding proteins, this protein initially binds near the 5'-end of the 23S rRNA. It is important during the early stages of 50S assembly. It makes multiple contacts with different domains of the 23S rRNA in the assembled 50S subunit and ribosome. Forms part of the polypeptide exit tunnel. The protein is Large ribosomal subunit protein uL4 of Wigglesworthia glossinidia brevipalpis.